Reading from the N-terminus, the 367-residue chain is Probable protein phosphatase 2C 57 (367 aa).

Positions 1 to 29 are disordered; that stretch reads MEEHRLGGGGGGGGGGGRPPIPGAAGRKL. Residues 7–18 are compositionally biased toward gly residues; it reads GGGGGGGGGGGR. In terms of domain architecture, PPM-type phosphatase spans 67–331; that stretch reads RSGGWADIGS…DNLSVVVICF (265 aa). Residues aspartate 111, glycine 112, aspartate 279, and aspartate 322 each coordinate Mn(2+).

It belongs to the PP2C family. Requires Mg(2+) as cofactor. The cofactor is Mn(2+).

It catalyses the reaction O-phospho-L-seryl-[protein] + H2O = L-seryl-[protein] + phosphate. The enzyme catalyses O-phospho-L-threonyl-[protein] + H2O = L-threonyl-[protein] + phosphate. In Oryza sativa subsp. japonica (Rice), this protein is Probable protein phosphatase 2C 57.